A 157-amino-acid polypeptide reads, in one-letter code: Arginine repressor (157 aa).

It belongs to the ArgR family.

It localises to the cytoplasm. Its pathway is amino-acid biosynthesis; L-arginine biosynthesis [regulation]. Its function is as follows. Regulates arginine biosynthesis genes. The chain is Arginine repressor from Colwellia psychrerythraea (strain 34H / ATCC BAA-681) (Vibrio psychroerythus).